The primary structure comprises 242 residues: Protein CDV3 homolog B (242 aa).

Over residues methionine 1–lysine 15 the composition is skewed to basic and acidic residues. Positions methionine 1–glutamine 242 are disordered. An N-acetylalanine modification is found at alanine 2. Residues alanine 30–lysine 57 show a composition bias toward low complexity. Positions valine 59–glutamate 75 are enriched in basic and acidic residues. Positions lysine 105–glutamate 122 are enriched in acidic residues. Composition is skewed to polar residues over residues aspartate 129–alanine 143 and serine 183–alanine 194. Residues lysine 195 to lysine 213 show a composition bias toward basic and acidic residues.

The protein belongs to the CDV3 family.

The protein resides in the cytoplasm. This chain is Protein CDV3 homolog B (cdv3-b), found in Xenopus laevis (African clawed frog).